Consider the following 511-residue polypeptide: MTLVLKPGSVPLETLETIYREGLPVRIDPAFHAGVEKAAARIAEIAAGDEPVYGINTGFGKLASIRIAAGDVATLQRNLILSHCCGVGEPLSENIVRLIMALKLISLGRGASGVRLEVITLIEDMLKKGVIPMIPEKGSVGASGDLAPLAHMTAAMIGEGEAFYKGERLPSAKALEKAGLKPVVLAAKEGLALINGTQTSTALALAGLFRAHRAAQTALITGALSTDAAMGSDAPFHEEIHTLRGHKGQIDAGRALRALLEGSVIRQSHLEGDQRVQDPYCIRCQPQVDGACLDILRQAARTLEIEANAVTDNPLILSDGRAVSGGNFHAEPVAFAADQIALAVCEIGAISQRRIALLVDPALSFGLPAFLARKPGLNSGLMIAEVTSAALMSENKQMAHPASVDSTPTSANQEDHVSMACHGARRLLQMTANLNAIIGIEALTGALGVELREPLTTSPELAKVIAVLRGKVPTLEDDRYMADDLKNAAELVVDGALAGAVSSGILPSLEA.

The 5-imidazolinone (Ala-Gly) cross-link spans 142-144 (ASG). Position 143 is a 2,3-didehydroalanine (Ser) (Ser-143).

The protein belongs to the PAL/histidase family. Contains an active site 4-methylidene-imidazol-5-one (MIO), which is formed autocatalytically by cyclization and dehydration of residues Ala-Ser-Gly.

The protein resides in the cytoplasm. The enzyme catalyses L-histidine = trans-urocanate + NH4(+). Its pathway is amino-acid degradation; L-histidine degradation into L-glutamate; N-formimidoyl-L-glutamate from L-histidine: step 1/3. This is Histidine ammonia-lyase from Brucella anthropi (strain ATCC 49188 / DSM 6882 / CCUG 24695 / JCM 21032 / LMG 3331 / NBRC 15819 / NCTC 12168 / Alc 37) (Ochrobactrum anthropi).